The chain runs to 227 residues: Cytochrome c oxidase subunit 2 (227 aa).

Over M1–S14 the chain is Mitochondrial intermembrane. Residues P15 to M45 traverse the membrane as a helical segment. At L46–Q59 the chain is on the mitochondrial matrix side. The chain crosses the membrane as a helical span at residues E60–M87. The Mitochondrial intermembrane segment spans residues D88–A227. The Cu cation site is built by H161, C196, E198, C200, H204, and M207. E198 is a binding site for Mg(2+). Y218 carries the post-translational modification Phosphotyrosine.

The protein belongs to the cytochrome c oxidase subunit 2 family. As to quaternary structure, component of the cytochrome c oxidase (complex IV, CIV), a multisubunit enzyme composed of 14 subunits. The complex is composed of a catalytic core of 3 subunits MT-CO1, MT-CO2 and MT-CO3, encoded in the mitochondrial DNA, and 11 supernumerary subunits COX4I, COX5A, COX5B, COX6A, COX6B, COX6C, COX7A, COX7B, COX7C, COX8 and NDUFA4, which are encoded in the nuclear genome. The complex exists as a monomer or a dimer and forms supercomplexes (SCs) in the inner mitochondrial membrane with NADH-ubiquinone oxidoreductase (complex I, CI) and ubiquinol-cytochrome c oxidoreductase (cytochrome b-c1 complex, complex III, CIII), resulting in different assemblies (supercomplex SCI(1)III(2)IV(1) and megacomplex MCI(2)III(2)IV(2)). Found in a complex with TMEM177, COA6, COX18, COX20, SCO1 and SCO2. Interacts with TMEM177 in a COX20-dependent manner. Interacts with COX20. Interacts with COX16. Requires Cu cation as cofactor.

The protein localises to the mitochondrion inner membrane. It catalyses the reaction 4 Fe(II)-[cytochrome c] + O2 + 8 H(+)(in) = 4 Fe(III)-[cytochrome c] + 2 H2O + 4 H(+)(out). Its function is as follows. Component of the cytochrome c oxidase, the last enzyme in the mitochondrial electron transport chain which drives oxidative phosphorylation. The respiratory chain contains 3 multisubunit complexes succinate dehydrogenase (complex II, CII), ubiquinol-cytochrome c oxidoreductase (cytochrome b-c1 complex, complex III, CIII) and cytochrome c oxidase (complex IV, CIV), that cooperate to transfer electrons derived from NADH and succinate to molecular oxygen, creating an electrochemical gradient over the inner membrane that drives transmembrane transport and the ATP synthase. Cytochrome c oxidase is the component of the respiratory chain that catalyzes the reduction of oxygen to water. Electrons originating from reduced cytochrome c in the intermembrane space (IMS) are transferred via the dinuclear copper A center (CU(A)) of subunit 2 and heme A of subunit 1 to the active site in subunit 1, a binuclear center (BNC) formed by heme A3 and copper B (CU(B)). The BNC reduces molecular oxygen to 2 water molecules using 4 electrons from cytochrome c in the IMS and 4 protons from the mitochondrial matrix. This is Cytochrome c oxidase subunit 2 (MT-CO2) from Elephas maximus (Indian elephant).